A 361-amino-acid polypeptide reads, in one-letter code: sn-glycerol-3-phosphate import ATP-binding protein UgpC (361 aa).

The ABC transporter domain maps to 4 to 235 (LSFRNLKKTY…PASTFVAGFI (232 aa)). Residue 37–44 (GPSGCGKS) participates in ATP binding.

The protein belongs to the ABC transporter superfamily. sn-glycerol-3-phosphate importer (TC 3.A.1.1.3) family. In terms of assembly, the complex is composed of two ATP-binding proteins (UgpC), two transmembrane proteins (UgpA and UgpE) and a solute-binding protein (UgpB).

The protein resides in the cell inner membrane. It carries out the reaction sn-glycerol 3-phosphate(out) + ATP + H2O = sn-glycerol 3-phosphate(in) + ADP + phosphate + H(+). Its function is as follows. Part of the ABC transporter complex UgpBAEC involved in sn-glycerol-3-phosphate (G3P) import. Responsible for energy coupling to the transport system. The protein is sn-glycerol-3-phosphate import ATP-binding protein UgpC of Bordetella avium (strain 197N).